The primary structure comprises 160 residues: Cytochrome b6-f complex subunit 4 (160 aa).

Helical transmembrane passes span 36–56 (LLYMFPVVIFGSFACVIGLAV), 95–115 (LLGVLLMAAVPAGLLTVPFIE), and 131–151 (TVFLIGTFAAIWLGIGACLPI).

This sequence belongs to the cytochrome b family. PetD subfamily. In terms of assembly, the 4 large subunits of the cytochrome b6-f complex are cytochrome b6, subunit IV (17 kDa polypeptide, petD), cytochrome f and the Rieske protein, while the 4 small subunits are petG, petL, petM and petN. The complex functions as a dimer.

It localises to the plastid. It is found in the chloroplast thylakoid membrane. Component of the cytochrome b6-f complex, which mediates electron transfer between photosystem II (PSII) and photosystem I (PSI), cyclic electron flow around PSI, and state transitions. The chain is Cytochrome b6-f complex subunit 4 from Tupiella akineta (Green alga).